A 186-amino-acid polypeptide reads, in one-letter code: Cell division protein SepF (186 aa).

The disordered stretch occupies residues 24–91 (EDEEEEERYA…HNPPHLRAVP (68 aa)).

Belongs to the SepF family. In terms of assembly, homodimer. Interacts with FtsZ.

Its subcellular location is the cytoplasm. Cell division protein that is part of the divisome complex and is recruited early to the Z-ring. Probably stimulates Z-ring formation, perhaps through the cross-linking of FtsZ protofilaments. Its function overlaps with FtsA. The polypeptide is Cell division protein SepF (Rubrobacter xylanophilus (strain DSM 9941 / JCM 11954 / NBRC 16129 / PRD-1)).